Reading from the N-terminus, the 238-residue chain is uncharacterized protein (238 aa).

A run of 4 helical transmembrane segments spans residues 16–36 (HLII…IGLE), 44–64 (VGVK…IVSI), 81–101 (PMRL…GVIL), and 123–143 (IGIA…VMIL).

Belongs to the MgtC/SapB family.

It is found in the cell inner membrane. This is an uncharacterized protein from Haemophilus influenzae (strain ATCC 51907 / DSM 11121 / KW20 / Rd).